The following is a 331-amino-acid chain: Ferrochelatase (331 aa).

Fe cation contacts are provided by His-187 and Glu-286.

This sequence belongs to the ferrochelatase family.

It localises to the cytoplasm. The catalysed reaction is heme b + 2 H(+) = protoporphyrin IX + Fe(2+). Its pathway is porphyrin-containing compound metabolism; protoheme biosynthesis; protoheme from protoporphyrin-IX: step 1/1. Catalyzes the ferrous insertion into protoporphyrin IX. The chain is Ferrochelatase from Legionella pneumophila (strain Corby).